The sequence spans 199 residues: FMN-dependent NADH:quinone oxidoreductase 4 (199 aa).

Residues Ser-10, 95–98, and 139–142 contribute to the FMN site; these read MYNL and SRGG.

The protein belongs to the azoreductase type 1 family. Homodimer. It depends on FMN as a cofactor.

It catalyses the reaction 2 a quinone + NADH + H(+) = 2 a 1,4-benzosemiquinone + NAD(+). The catalysed reaction is N,N-dimethyl-1,4-phenylenediamine + anthranilate + 2 NAD(+) = 2-(4-dimethylaminophenyl)diazenylbenzoate + 2 NADH + 2 H(+). Functionally, quinone reductase that provides resistance to thiol-specific stress caused by electrophilic quinones. Its function is as follows. Also exhibits azoreductase activity. Catalyzes the reductive cleavage of the azo bond in aromatic azo compounds to the corresponding amines. This chain is FMN-dependent NADH:quinone oxidoreductase 4, found in Burkholderia lata (strain ATCC 17760 / DSM 23089 / LMG 22485 / NCIMB 9086 / R18194 / 383).